Consider the following 430-residue polypeptide: MKNVLAIILGGGAGSRLYPLTKQRAKPAVPLAGKYRLIDIPVSNCINADINKIYVLTQFNSASLNRHLSQTYNLSSGFGNGFVEVLAAQITPENPNWFQGTADAVRQYLWLIKEWDVDEYLILSGDHLYRMDYSQFIQRHRDTNADITLSVLPIDEKRASDFGLMKLDGSGRVVEFSEKPKGDELRAMQVDTTILGLDPVAAAAQPFIASMGIYVFKRDVLIDLLSHHPEQTDFGKEVIPAAATRYNTQAFLFNDYWEDIGTIASFYEANLALTQQPSPPFSFYDEQAPIYTRARYLPPTKLLDCQVTQSIIGEGCILKQCTVQNSVLGIRSRIEADCVIQDALLMGADFYETSELRHQNRANGKVPMGIGSGSTIRRAIVDKNAHIGQNVQIVNKDHVEEADREDLGFMIRSGIVVVVKGAVIPDNTVI.

Alpha-D-glucose 1-phosphate contacts are provided by residues Gly163, 178–179 (EK), and Ser210.

The protein belongs to the bacterial/plant glucose-1-phosphate adenylyltransferase family. As to quaternary structure, homotetramer.

It catalyses the reaction alpha-D-glucose 1-phosphate + ATP + H(+) = ADP-alpha-D-glucose + diphosphate. Its pathway is glycan biosynthesis; glycogen biosynthesis. Involved in the biosynthesis of ADP-glucose, a building block required for the elongation reactions to produce glycogen. Catalyzes the reaction between ATP and alpha-D-glucose 1-phosphate (G1P) to produce pyrophosphate and ADP-Glc. In Synechococcus elongatus (strain ATCC 33912 / PCC 7942 / FACHB-805) (Anacystis nidulans R2), this protein is Glucose-1-phosphate adenylyltransferase.